We begin with the raw amino-acid sequence, 251 residues long: Cell division protein ZapD (251 aa).

It belongs to the ZapD family. In terms of assembly, interacts with FtsZ.

It localises to the cytoplasm. Its function is as follows. Cell division factor that enhances FtsZ-ring assembly. Directly interacts with FtsZ and promotes bundling of FtsZ protofilaments, with a reduction in FtsZ GTPase activity. The sequence is that of Cell division protein ZapD from Paraburkholderia phytofirmans (strain DSM 17436 / LMG 22146 / PsJN) (Burkholderia phytofirmans).